The primary structure comprises 626 residues: Serine/threonine-protein kinase PknB (626 aa).

At 1–332 the chain is on the cytoplasmic side; it reads MTTPSHLSDR…DRSIGSVGRW (332 aa). Positions 11-274 constitute a Protein kinase domain; the sequence is YELGEILGFG…TAAEMRADLV (264 aa). Residues 17–25, K40, and 93–95 each bind ATP; these read LGFGGMSEV and EYV. D138 serves as the catalytic Proton acceptor. ATP-binding positions include 140–143 and D156; that span reads KPAN. Residues N143 and D156 each contribute to the Mg(2+) site. Residues S166 and S169 each carry the phosphoserine; by autocatalysis modification. Residues T171, T173, and T294 each carry the phosphothreonine; by autocatalysis modification. S295 is modified (phosphoserine; by autocatalysis). Residues 299–323 form a disordered region; the sequence is SAAGNLSGPRTDPLPRQDLDDTDRD. Phosphothreonine; by autocatalysis is present on T309. Basic and acidic residues predominate over residues 311–323; that stretch reads PLPRQDLDDTDRD. The chain crosses the membrane as a helical span at residues 333–353; sequence VAVVAVLAVLTVVVTIAINTF. The Extracellular portion of the chain corresponds to 354-626; the sequence is GGITRDVQVP…DGIITLRFGQ (273 aa). 4 PASTA domains span residues 356–422, 423–490, 491–557, and 558–626; these read ITRD…NVST, GPEQ…IVGS, GPAT…QVSK, and GNQF…RFGQ.

This sequence belongs to the protein kinase superfamily. Ser/Thr protein kinase family. In terms of assembly, homodimer. Autophosphorylated. Dephosphorylated by PstP.

The protein localises to the cell membrane. The enzyme catalyses L-seryl-[protein] + ATP = O-phospho-L-seryl-[protein] + ADP + H(+). It carries out the reaction L-threonyl-[protein] + ATP = O-phospho-L-threonyl-[protein] + ADP + H(+). Its function is as follows. Protein kinase that regulates many aspects of mycobacterial physiology. Is a key component of a signal transduction pathway that regulates cell growth, cell shape and cell division via phosphorylation of target proteins. This chain is Serine/threonine-protein kinase PknB (pknB), found in Mycobacterium bovis (strain ATCC BAA-935 / AF2122/97).